We begin with the raw amino-acid sequence, 360 residues long: 3-dehydroquinate synthase (360 aa).

Residues 106–110, 130–131, K143, and K152 each bind NAD(+); these read GVIGD and TS. Residues E185, H246, and H262 each contribute to the Zn(2+) site.

It belongs to the sugar phosphate cyclases superfamily. Dehydroquinate synthase family. Co(2+) is required as a cofactor. Zn(2+) serves as cofactor. Requires NAD(+) as cofactor.

It is found in the cytoplasm. It carries out the reaction 7-phospho-2-dehydro-3-deoxy-D-arabino-heptonate = 3-dehydroquinate + phosphate. It participates in metabolic intermediate biosynthesis; chorismate biosynthesis; chorismate from D-erythrose 4-phosphate and phosphoenolpyruvate: step 2/7. Its function is as follows. Catalyzes the conversion of 3-deoxy-D-arabino-heptulosonate 7-phosphate (DAHP) to dehydroquinate (DHQ). This Leuconostoc citreum (strain KM20) protein is 3-dehydroquinate synthase.